A 311-amino-acid chain; its full sequence is Solute carrier family 25 member 36-A (311 aa).

3 Solcar repeats span residues 4–108, 116–203, and 224–308; these read RDTL…SKEK, DSTQ…IKRK, and SDFV…VVYL. The next 6 helical transmembrane spans lie at 7 to 27, 41 to 57, 111 to 131, 180 to 200, 226 to 246, and 291 to 311; these read LVHL…TCPL, FYIS…ASVA, NVFD…AGFT, MSAS…YESI, FVGM…IAYP, and QIPN…LLNG.

It belongs to the mitochondrial carrier (TC 2.A.29) family.

The protein localises to the mitochondrion inner membrane. In Danio rerio (Zebrafish), this protein is Solute carrier family 25 member 36-A (slc25a36a).